A 734-amino-acid chain; its full sequence is Photosystem I P700 chlorophyll a apoprotein A2 (734 aa).

8 helical membrane passes run 46–69 (IFAS…FHVA), 135–158 (LYTG…LHLQ), 175–199 (LNHH…HVAI), 273–291 (MAHH…GHMY), 330–353 (IHFQ…QHMY), 369–395 (AALY…IFFI), 417–439 (AIIS…LYVH), and 517–535 (FLVH…LILV). Positions 559 and 568 each coordinate [4Fe-4S] cluster. The next 2 membrane-spanning stretches (helical) occupy residues 575-596 (AFYL…YWHW) and 643-665 (LSVW…MFLI). 3 residues coordinate chlorophyll a: His654, Met662, and Tyr670. A phylloquinone-binding site is contributed by Trp671. Residues 707–727 (LVGLAHFSVGYIFTYAAFLIA) traverse the membrane as a helical segment.

It belongs to the PsaA/PsaB family. In terms of assembly, the PsaA/B heterodimer binds the P700 chlorophyll special pair and subsequent electron acceptors. PSI consists of a core antenna complex that captures photons, and an electron transfer chain that converts photonic excitation into a charge separation. The eukaryotic PSI reaction center is composed of at least 11 subunits. P700 is a chlorophyll a/chlorophyll a' dimer, A0 is one or more chlorophyll a, A1 is one or both phylloquinones and FX is a shared 4Fe-4S iron-sulfur center. serves as cofactor.

The protein localises to the plastid. The protein resides in the chloroplast thylakoid membrane. The catalysed reaction is reduced [plastocyanin] + hnu + oxidized [2Fe-2S]-[ferredoxin] = oxidized [plastocyanin] + reduced [2Fe-2S]-[ferredoxin]. Functionally, psaA and PsaB bind P700, the primary electron donor of photosystem I (PSI), as well as the electron acceptors A0, A1 and FX. PSI is a plastocyanin-ferredoxin oxidoreductase, converting photonic excitation into a charge separation, which transfers an electron from the donor P700 chlorophyll pair to the spectroscopically characterized acceptors A0, A1, FX, FA and FB in turn. Oxidized P700 is reduced on the lumenal side of the thylakoid membrane by plastocyanin. The chain is Photosystem I P700 chlorophyll a apoprotein A2 from Triticum aestivum (Wheat).